The primary structure comprises 92 residues: Small ribosomal subunit protein uS19 (92 aa).

It belongs to the universal ribosomal protein uS19 family.

Protein S19 forms a complex with S13 that binds strongly to the 16S ribosomal RNA. This chain is Small ribosomal subunit protein uS19, found in Rickettsia typhi (strain ATCC VR-144 / Wilmington).